A 45-amino-acid chain; its full sequence is uncharacterized protein (45 aa).

This is an uncharacterized protein from Saccharomyces cerevisiae (strain ATCC 204508 / S288c) (Baker's yeast).